Here is a 322-residue protein sequence, read N- to C-terminus: UDP-galactose transporter homolog 1 (322 aa).

A run of 5 helical transmembrane segments spans residues 4-24 (FMRQ…SWAV), 43-63 (ALLS…WNWF), 76-96 (FLGY…FGYA), 105-125 (TVIL…VFVY), and 129-149 (FPPH…IFSY). A glycan (N-linked (GlcNAc...) asparagine) is linked at asparagine 152. Helical transmembrane passes span 164 to 184 (SPIG…TNTT), 199 to 219 (MMIA…ISPF), 250 to 270 (LFIF…ITLT), and 290 to 310 (IQWL…GLKI). Residues asparagine 313 and asparagine 314 are each glycosylated (N-linked (GlcNAc...) asparagine).

This sequence belongs to the nucleotide-sugar transporter family. SLC35B subfamily.

It is found in the endoplasmic reticulum membrane. Its function is as follows. May be involved in specific transport of UDP-Gal from the cytosol to the Golgi lumen. Involved in the maintenance of optimal conditions for the folding of secretory pathway proteins in the endoplasmic reticulum. The sequence is that of UDP-galactose transporter homolog 1 (hut1) from Schizosaccharomyces pombe (strain 972 / ATCC 24843) (Fission yeast).